Consider the following 322-residue polypeptide: Peroxidase 66 (322 aa).

Residues 1 to 24 form the signal peptide; sequence MAFSKGLIFAMIFAVLAIVKPSEA. 2 cysteine pairs are disulfide-bonded: Cys-35–Cys-114 and Cys-68–Cys-73. His-66 acts as the Proton acceptor in catalysis. Positions 67, 72, 74, and 76 each coordinate Ca(2+). Asn-155 is a glycosylation site (N-linked (GlcNAc...) asparagine). Pro-161 lines the substrate pocket. An N-linked (GlcNAc...) asparagine glycan is attached at Asn-166. Position 191 (His-191) interacts with heme b. Residue Thr-192 coordinates Ca(2+). The cysteines at positions 198 and 230 are disulfide-linked. The N-linked (GlcNAc...) asparagine glycan is linked to Asn-207. Residues Asp-245, Thr-247, and Asp-252 each contribute to the Ca(2+) site.

The protein belongs to the peroxidase family. Classical plant (class III) peroxidase subfamily. Heme b serves as cofactor. Ca(2+) is required as a cofactor.

The protein resides in the secreted. The catalysed reaction is 2 a phenolic donor + H2O2 = 2 a phenolic radical donor + 2 H2O. Functionally, removal of H(2)O(2), oxidation of toxic reductants, biosynthesis and degradation of lignin, suberization, auxin catabolism, response to environmental stresses such as wounding, pathogen attack and oxidative stress. These functions might be dependent on each isozyme/isoform in each plant tissue. The chain is Peroxidase 66 (PER66) from Arabidopsis thaliana (Mouse-ear cress).